A 301-amino-acid polypeptide reads, in one-letter code: Oxygen-dependent coproporphyrinogen-III oxidase (301 aa).

Ser-90 contacts substrate. Positions 94 and 104 each coordinate a divalent metal cation. His-104 acts as the Proton donor in catalysis. 106 to 108 is a substrate binding site; the sequence is NVR. His-143 and His-173 together coordinate a divalent metal cation. The tract at residues 238-273 is important for dimerization; the sequence is YVEFNLVWDRGTLFGLQSGGRTESILMSLPPVVKWR. A substrate-binding site is contributed by 256 to 258; it reads GGR.

The protein belongs to the aerobic coproporphyrinogen-III oxidase family. As to quaternary structure, homodimer. A divalent metal cation serves as cofactor.

The protein localises to the cytoplasm. The enzyme catalyses coproporphyrinogen III + O2 + 2 H(+) = protoporphyrinogen IX + 2 CO2 + 2 H2O. It participates in porphyrin-containing compound metabolism; protoporphyrin-IX biosynthesis; protoporphyrinogen-IX from coproporphyrinogen-III (O2 route): step 1/1. Involved in the heme biosynthesis. Catalyzes the aerobic oxidative decarboxylation of propionate groups of rings A and B of coproporphyrinogen-III to yield the vinyl groups in protoporphyrinogen-IX. This Nitrosomonas europaea (strain ATCC 19718 / CIP 103999 / KCTC 2705 / NBRC 14298) protein is Oxygen-dependent coproporphyrinogen-III oxidase.